The primary structure comprises 55 residues: uncharacterized protein (55 aa).

Its subcellular location is the plastid. This is an uncharacterized protein from Cuscuta reflexa (Southern Asian dodder).